A 1022-amino-acid polypeptide reads, in one-letter code: D-2-hydroxyglutarate dehydrogenase (1022 aa).

The FAD-binding PCMH-type domain maps to 53–286; sequence YQLLPDAVLF…SEARLDITPL (234 aa). (R)-2-hydroxyglutarate-binding residues include Arg407 and His505. Residues 667–700 form the 4Fe-4S ferredoxin-type domain; it reads FSHEVKEAMSGCLACKACSTQCPIKIDVPAFRSR. [4Fe-4S] cluster-binding residues include Cys678, Cys681, Cys684, and Cys688.

This sequence in the N-terminal section; belongs to the FAD-binding oxidoreductase/transferase type 4 family. As to quaternary structure, homotetramer. It depends on [4Fe-4S] cluster as a cofactor. FAD serves as cofactor.

The catalysed reaction is (R)-2-hydroxyglutarate + A = 2-oxoglutarate + AH2. Activity is completely inhibited by the addition of 0.5 mM Mn(2+), Ni(2+), or Co(2+) and partially inhibited by 0.5 mM Zn(2+). Its function is as follows. Catalyzes the oxidation of D-2-hydroxyglutarate (D-2-HGA) to 2-oxoglutarate. Appears to be the only D2HGDH in P.ananatis, providing the way to recycle D-2-HGA produced during L-serine synthesis by SerA, by converting it back to 2-oxoglutarate. Is involved in the utilization of D-2-HGA, that can support the growth of P.ananatis as a sole carbon source, although it barely serves as a good substrate. The physiological molecule that functions as the primary electron acceptor during D-2-HGA oxidation by YdiJ in P.ananatis is unknown. Shows strict substrate specificity towards D-2-HGA, since it has no detectable activity on L-2-hydroxyglutarate, L-malate, D-malate, L-lactate, D-lactate, L-tartrate, D-tartrate, L-glycerate, D-glycerate, glutarate, or pyruvate. This is D-2-hydroxyglutarate dehydrogenase from Pantoea ananatis (strain AJ13355).